Here is a 255-residue protein sequence, read N- to C-terminus: Type III pantothenate kinase (255 aa).

Asp6 to Glu13 serves as a coordination point for ATP. Residues Tyr100 and Gly107–Arg110 each bind substrate. Asp109 functions as the Proton acceptor in the catalytic mechanism. Residue Asp129 coordinates K(+). Residue Thr132 participates in ATP binding. Thr184 is a substrate binding site.

The protein belongs to the type III pantothenate kinase family. Homodimer. The cofactor is NH4(+). Requires K(+) as cofactor.

The protein localises to the cytoplasm. It carries out the reaction (R)-pantothenate + ATP = (R)-4'-phosphopantothenate + ADP + H(+). The protein operates within cofactor biosynthesis; coenzyme A biosynthesis; CoA from (R)-pantothenate: step 1/5. Catalyzes the phosphorylation of pantothenate (Pan), the first step in CoA biosynthesis. The polypeptide is Type III pantothenate kinase (Persephonella marina (strain DSM 14350 / EX-H1)).